A 115-amino-acid polypeptide reads, in one-letter code: Ig heavy chain V region PJ14 (115 aa).

The first 19 residues, Met-1–Ser-19, serve as a signal peptide directing secretion. Residues Gln-20 to Ala-115 form the Ig-like domain.

This chain is Ig heavy chain V region PJ14, found in Mus musculus (Mouse).